A 220-amino-acid chain; its full sequence is Octanoyltransferase (220 aa).

Positions 36-212 constitute a BPL/LPL catalytic domain; the sequence is ADSPDQFWLV…CLARQLGRRL (177 aa). Residues 75–82, 142–144, and 155–157 each bind substrate; these read RGGQVTYH, SLG, and GVA. The active-site Acyl-thioester intermediate is the cysteine 173.

It belongs to the LipB family.

Its subcellular location is the cytoplasm. The catalysed reaction is octanoyl-[ACP] + L-lysyl-[protein] = N(6)-octanoyl-L-lysyl-[protein] + holo-[ACP] + H(+). It functions in the pathway protein modification; protein lipoylation via endogenous pathway; protein N(6)-(lipoyl)lysine from octanoyl-[acyl-carrier-protein]: step 1/2. Its function is as follows. Catalyzes the transfer of endogenously produced octanoic acid from octanoyl-acyl-carrier-protein onto the lipoyl domains of lipoate-dependent enzymes. Lipoyl-ACP can also act as a substrate although octanoyl-ACP is likely to be the physiological substrate. In Chromohalobacter salexigens (strain ATCC BAA-138 / DSM 3043 / CIP 106854 / NCIMB 13768 / 1H11), this protein is Octanoyltransferase.